Here is a 202-residue protein sequence, read N- to C-terminus: Small ribosomal subunit protein uS4 (202 aa).

A disordered region spans residues T22–S43. An S4 RNA-binding domain is found at M90–N152.

Belongs to the universal ribosomal protein uS4 family. As to quaternary structure, part of the 30S ribosomal subunit. Contacts protein S5. The interaction surface between S4 and S5 is involved in control of translational fidelity.

One of the primary rRNA binding proteins, it binds directly to 16S rRNA where it nucleates assembly of the body of the 30S subunit. In terms of biological role, with S5 and S12 plays an important role in translational accuracy. This Trichormus variabilis (strain ATCC 29413 / PCC 7937) (Anabaena variabilis) protein is Small ribosomal subunit protein uS4.